The sequence spans 389 residues: Probable DNA double-strand break repair nuclease NurA (389 aa).

The Mn(2+) site is built by D74 and D151.

This sequence belongs to the NurA family. Mn(2+) is required as a cofactor.

Involved in DNA double-strand break (DSB) repair. Probably acts with HerA to stimulate resection of the 5' strand and produce the long 3' single-strand that is required for RadA loading. In Methanocaldococcus jannaschii (strain ATCC 43067 / DSM 2661 / JAL-1 / JCM 10045 / NBRC 100440) (Methanococcus jannaschii), this protein is Probable DNA double-strand break repair nuclease NurA.